The primary structure comprises 71 residues: Omega-conotoxin-like CnVIIF (71 aa).

3 disulfide bridges follow: cysteine 46–cysteine 61, cysteine 53–cysteine 65, and cysteine 60–cysteine 70. Position 70 is a cysteine amide; in CnVIID (cysteine 70).

This sequence belongs to the conotoxin M superfamily. Expressed by the venom duct.

It localises to the secreted. In terms of biological role, omega-conotoxins act at presynaptic membranes, they bind and block voltage-gated calcium channels (Cav). The chain is Omega-conotoxin-like CnVIIF from Conus consors (Singed cone).